The following is a 93-amino-acid chain: Acylphosphatase (93 aa).

One can recognise an Acylphosphatase-like domain in the interval 3–93 (KQQYFISGKV…FQFNNFKIYY (91 aa)). Active-site residues include Arg18 and Asn36.

It belongs to the acylphosphatase family.

It catalyses the reaction an acyl phosphate + H2O = a carboxylate + phosphate + H(+). This Borrelia garinii subsp. bavariensis (strain ATCC BAA-2496 / DSM 23469 / PBi) (Borreliella bavariensis) protein is Acylphosphatase (acyP).